The following is a 345-amino-acid chain: Anthranilate phosphoribosyltransferase (345 aa).

5-phospho-alpha-D-ribose 1-diphosphate is bound by residues Gly84, 87–88 (GD), Thr92, 94–97 (NIST), 112–120 (KHGNRSVSS), and Ser124. Gly84 is a binding site for anthranilate. Ser96 contacts Mg(2+). An anthranilate-binding site is contributed by Asn115. Arg170 contacts anthranilate. Mg(2+)-binding residues include Asp229 and Glu230.

It belongs to the anthranilate phosphoribosyltransferase family. Homodimer. Mg(2+) is required as a cofactor.

It carries out the reaction N-(5-phospho-beta-D-ribosyl)anthranilate + diphosphate = 5-phospho-alpha-D-ribose 1-diphosphate + anthranilate. It functions in the pathway amino-acid biosynthesis; L-tryptophan biosynthesis; L-tryptophan from chorismate: step 2/5. Its function is as follows. Catalyzes the transfer of the phosphoribosyl group of 5-phosphorylribose-1-pyrophosphate (PRPP) to anthranilate to yield N-(5'-phosphoribosyl)-anthranilate (PRA). The polypeptide is Anthranilate phosphoribosyltransferase (Xanthomonas campestris pv. campestris (strain 8004)).